A 68-amino-acid chain; its full sequence is Beta-defensin 1 (68 aa).

Residues 1 to 21 form the signal peptide; it reads MRTSYLLLFTLCLLLSEMASG. Residues 22–32 constitute a propeptide that is removed on maturation; that stretch reads DNFLTGLGHRS. Intrachain disulfides connect C37–C66, C44–C59, and C49–C67.

The protein belongs to the beta-defensin family. Monomer. Homodimer.

The protein localises to the secreted. It localises to the membrane. Its function is as follows. Has bactericidal activity. May act as a ligand for C-C chemokine receptor CCR6. Positively regulates the sperm motility and bactericidal activity in a CCR6-dependent manner. Binds to CCR6 and triggers Ca2+ mobilization in the sperm which is important for its motility. The polypeptide is Beta-defensin 1 (DEFB1) (Hylobates moloch (Silvery gibbon)).